Consider the following 250-residue polypeptide: 5'-nucleotidase SurE (250 aa).

The a divalent metal cation site is built by aspartate 8, aspartate 9, serine 40, and asparagine 95.

The protein belongs to the SurE nucleotidase family. The cofactor is a divalent metal cation.

It localises to the cytoplasm. The enzyme catalyses a ribonucleoside 5'-phosphate + H2O = a ribonucleoside + phosphate. Its function is as follows. Nucleotidase that shows phosphatase activity on nucleoside 5'-monophosphates. This Nitratidesulfovibrio vulgaris (strain ATCC 29579 / DSM 644 / CCUG 34227 / NCIMB 8303 / VKM B-1760 / Hildenborough) (Desulfovibrio vulgaris) protein is 5'-nucleotidase SurE.